The chain runs to 375 residues: Dual-specificity RNA methyltransferase RlmN (375 aa).

Glu94 acts as the Proton acceptor in catalysis. The Radical SAM core domain maps to 100–339 (EEDRATLCVS…VTVRKTRGDD (240 aa)). Cys107 and Cys344 form a disulfide bridge. Positions 114, 118, and 121 each coordinate [4Fe-4S] cluster. S-adenosyl-L-methionine-binding positions include 168–169 (GE), Ser200, 222–224 (SLH), and Asn301. Cys344 (S-methylcysteine intermediate) is an active-site residue.

This sequence belongs to the radical SAM superfamily. RlmN family. [4Fe-4S] cluster serves as cofactor.

Its subcellular location is the cytoplasm. It catalyses the reaction adenosine(2503) in 23S rRNA + 2 reduced [2Fe-2S]-[ferredoxin] + 2 S-adenosyl-L-methionine = 2-methyladenosine(2503) in 23S rRNA + 5'-deoxyadenosine + L-methionine + 2 oxidized [2Fe-2S]-[ferredoxin] + S-adenosyl-L-homocysteine. The enzyme catalyses adenosine(37) in tRNA + 2 reduced [2Fe-2S]-[ferredoxin] + 2 S-adenosyl-L-methionine = 2-methyladenosine(37) in tRNA + 5'-deoxyadenosine + L-methionine + 2 oxidized [2Fe-2S]-[ferredoxin] + S-adenosyl-L-homocysteine. Its function is as follows. Specifically methylates position 2 of adenine 2503 in 23S rRNA and position 2 of adenine 37 in tRNAs. m2A2503 modification seems to play a crucial role in the proofreading step occurring at the peptidyl transferase center and thus would serve to optimize ribosomal fidelity. This is Dual-specificity RNA methyltransferase RlmN from Vibrio parahaemolyticus serotype O3:K6 (strain RIMD 2210633).